Reading from the N-terminus, the 263-residue chain is Tryptophan synthase alpha chain (263 aa).

Catalysis depends on proton acceptor residues Glu46 and Asp57.

Belongs to the TrpA family. In terms of assembly, tetramer of two alpha and two beta chains.

The enzyme catalyses (1S,2R)-1-C-(indol-3-yl)glycerol 3-phosphate + L-serine = D-glyceraldehyde 3-phosphate + L-tryptophan + H2O. Its pathway is amino-acid biosynthesis; L-tryptophan biosynthesis; L-tryptophan from chorismate: step 5/5. The alpha subunit is responsible for the aldol cleavage of indoleglycerol phosphate to indole and glyceraldehyde 3-phosphate. The chain is Tryptophan synthase alpha chain from Bacteroides fragilis (strain ATCC 25285 / DSM 2151 / CCUG 4856 / JCM 11019 / LMG 10263 / NCTC 9343 / Onslow / VPI 2553 / EN-2).